We begin with the raw amino-acid sequence, 160 residues long: Ribosomal RNA large subunit methyltransferase H (160 aa).

Residues Leu77, Gly109, and 128-133 each bind S-adenosyl-L-methionine; that span reads FGRITL.

It belongs to the RNA methyltransferase RlmH family. As to quaternary structure, homodimer.

The protein resides in the cytoplasm. It carries out the reaction pseudouridine(1915) in 23S rRNA + S-adenosyl-L-methionine = N(3)-methylpseudouridine(1915) in 23S rRNA + S-adenosyl-L-homocysteine + H(+). Its function is as follows. Specifically methylates the pseudouridine at position 1915 (m3Psi1915) in 23S rRNA. This is Ribosomal RNA large subunit methyltransferase H from Oenococcus oeni (strain ATCC BAA-331 / PSU-1).